The primary structure comprises 960 residues: Collagenase ColA (960 aa).

The N-terminal stretch at 1–30 is a signal peptide; sequence MNKNLRFTQMMIGISTMALSFGSIQTQVSA. The propeptide occupies 31–92; that stretch reads EETAPYNILQ…KRDEIQLKQS (62 aa). An activator domain region spans residues 93-365; sequence YTLAELNKMP…AVEQMKTNYG (273 aa). Residues 93-764 form an S1 metalloprotease domain region; that stretch reads YTLAELNKMP…VFHGVATEEK (672 aa). Residues 375–644 form a catalytic subdomain region; the sequence is DLQKIREEGK…MQQLIDNQDK (270 aa). H500 contributes to the Zn(2+) binding site. E501 is a catalytic residue. Positions 504 and 532 each coordinate Zn(2+). Positions 652-764 are helper subdomain; the sequence is NDYLIQHAPK…VFHGVATEEK (113 aa). Residues 768–849 form the PKD domain; it reads TTIVNMNGPY…ESKEQTKVTV (82 aa). Positions 836–845 are enriched in basic and acidic residues; the sequence is SRGKESKEQT. The interval 836–859 is disordered; that stretch reads SRGKESKEQTKVTVKQDPQTSESY. Positions 846 to 857 are enriched in polar residues; sequence KVTVKQDPQTSE. A collagen-binding domain region spans residues 852–960; sequence DPQTSESYEE…KNGEYSLLVK (109 aa).

The protein belongs to the peptidase M9B family. Collagenase subfamily. Requires Ca(2+) as cofactor. It depends on Zn(2+) as a cofactor.

It localises to the secreted. It catalyses the reaction Digestion of native collagen in the triple helical region at Xaa-|-Gly bonds. With synthetic peptides, a preference is shown for Gly at P3 and P1', Pro and Ala at P2 and P2', and hydroxyproline, Ala or Arg at P3'.. Functionally, acts as a true collagenase, which is highly active and efficiently targets native tropocollagen. In vitro, can also cleave gelatin and the synthetic peptide FALGPA (furylacryloyl-Leu-Gly-Pro-Ala). May contribute to bacterial virulence in endophthalmitis or opportunistic infections via collagen degradation in the host extracellular matrix (ECM). The protein is Collagenase ColA of Bacillus cereus (strain ATCC 14579 / DSM 31 / CCUG 7414 / JCM 2152 / NBRC 15305 / NCIMB 9373 / NCTC 2599 / NRRL B-3711).